We begin with the raw amino-acid sequence, 601 residues long: Vesicular glutamate transporter 3 (601 aa).

Residues 1 to 89 (MPFKAFDTFK…CSCCGIPKRY (89 aa)) lie on the Cytoplasmic side of the membrane. The chain crosses the membrane as a helical span at residues 90–110 (IIAVMSGLGFCISFGIRCNLG). The Vesicular segment spans residues 111 to 143 (VAIVEMVNNSTVYVDGKPEIQTAQFNWDPETVG). N-linked (GlcNAc...) asparagine glycosylation is present at N119. A helical membrane pass occupies residues 144–164 (LIHGSFFWGYIVTQIPGGFIS). The Cytoplasmic portion of the chain corresponds to 165 to 166 (NK). Residues 167–187 (FAASRVFGAAIFLTSTLNMFI) traverse the membrane as a helical segment. At 188–195 (PSAARVHY) the chain is on the vesicular side. Residues 196 to 216 (GCVMGVRILQGLVEGVTYPAC) traverse the membrane as a helical segment. At 217 to 234 (HGMWSKWAPPLERSRLAT) the chain is on the cytoplasmic side. The helical transmembrane segment at 235-255 (TSFCGSYAGAVVAMPLAGVLV) threads the bilayer. The Vesicular segment spans residues 256 to 262 (QYIGWAS). Residues 263–283 (VFYIYGMFGIIWYMFWLLQAY) traverse the membrane as a helical segment. Over 284–327 (ECPAAHPTISNAERTYIETSIGEGANLASLSKFNTPWRRFFTSL) the chain is Cytoplasmic. The chain crosses the membrane as a helical span at residues 328-348 (PVYAIIVANFCRSWTFYLLLI). Topologically, residues 349–366 (SQPAYFEEVFGFAISKVG) are vesicular. The chain crosses the membrane as a helical span at residues 367–387 (LLSAVPHMVMTIVVPIGGQLA). Over 388–403 (DYLRSRKILTTTAVRK) the chain is Cytoplasmic. A helical transmembrane segment spans residues 404 to 424 (IMNCGGFGMEATLLLVVGFSH). The Vesicular portion of the chain corresponds to 425–426 (TK). Residues 427–447 (GVAISFLVLAVGFSGFAISGF) form a helical membrane-spanning segment. Residues 448–460 (NVNHLDIAPRYAS) are Cytoplasmic-facing. A helical transmembrane segment spans residues 461–481 (ILMGISNGVGTLSGMVCPLIV). Topologically, residues 482-494 (GAMTKHKTREEWQ) are vesicular. Residues 495–515 (NVFLIAALVHYSGVIFYGVFA) traverse the membrane as a helical segment. Residues 516–598 (SGEKQDWADP…LSYQAEGDFS (83 aa)) lie on the Cytoplasmic side of the membrane. Positions 576-601 (RQQRESAFDGEEPLSYQAEGDFSETS) are disordered.

Belongs to the major facilitator superfamily. Sodium/anion cotransporter family. VGLUT subfamily. Expressed in restricted areas of the brain. Highest expression is found in the neurons of the basal forebrain, the hippocampal formation, and the majority of the neurons of the mesencephalic raphe nuclei. Expressed in inner hair cells of the ear.

It localises to the cytoplasmic vesicle. The protein localises to the secretory vesicle. The protein resides in the synaptic vesicle membrane. It is found in the cell membrane. Its subcellular location is the synapse. It localises to the synaptosome. The catalysed reaction is L-glutamate(out) = L-glutamate(in). It catalyses the reaction 3 Na(+)(out) + phosphate(out) = 3 Na(+)(in) + phosphate(in). The enzyme catalyses chloride(in) = chloride(out). Its activity is regulated as follows. The L-glutamate uniporter activity exhibits a biphasic dependence on chloride concentration. Chloride channel activity is allosterically activated by lumenal H(+) and Cl(-) leading to synaptic vesicles acidification. The L-glutamate transport activity is allosterically activated by lumenal H(+) and Cl(-), preventing non-vesicular L-glutamate release. Multifunctional transporter that transports L-glutamate as well as multiple ions such as chloride, sodium and phosphate. At the synaptic vesicle membrane, mainly functions as an uniporter that mediates the uptake of L-glutamate into synaptic vesicles at presynaptic nerve terminals of excitatory neural cells. The L-glutamate uniporter activity is electrogenic and is driven by the proton electrochemical gradient, mainly by the electrical gradient established by the vacuolar H(+)-ATPase across the synaptic vesicle membrane. In addition, functions as a chloride channel that allows a chloride permeation through the synaptic vesicle membrane that affects the proton electrochemical gradient and promotes synaptic vesicles acidification. At the plasma membrane, following exocytosis, functions as a symporter of Na(+) and phosphate from the extracellular space to the cytoplasm allowing synaptic phosphate homeostasis regulation. The symporter activity is electrogenic. Moreover, operates synergistically with SLC18A3/VACHT under a constant H(+) gradient, thereby allowing striatal vesicular acetylcholine uptake. In Mus musculus (Mouse), this protein is Vesicular glutamate transporter 3.